Consider the following 473-residue polypeptide: ATP synthase subunit beta (473 aa).

Residue glycine 153 to threonine 160 coordinates ATP.

This sequence belongs to the ATPase alpha/beta chains family. F-type ATPases have 2 components, CF(1) - the catalytic core - and CF(0) - the membrane proton channel. CF(1) has five subunits: alpha(3), beta(3), gamma(1), delta(1), epsilon(1). CF(0) has three main subunits: a(1), b(2) and c(9-12). The alpha and beta chains form an alternating ring which encloses part of the gamma chain. CF(1) is attached to CF(0) by a central stalk formed by the gamma and epsilon chains, while a peripheral stalk is formed by the delta and b chains.

The protein localises to the cell inner membrane. The catalysed reaction is ATP + H2O + 4 H(+)(in) = ADP + phosphate + 5 H(+)(out). In terms of biological role, produces ATP from ADP in the presence of a proton gradient across the membrane. The catalytic sites are hosted primarily by the beta subunits. The chain is ATP synthase subunit beta from Rickettsia massiliae (strain Mtu5).